The primary structure comprises 149 residues: Probable glycine-rich RNA-binding protein 1 (149 aa).

One can recognise an RRM domain in the interval 8-83 (YRCFVGGLAW…LDGRNITAQA (76 aa)). A disordered region spans residues 80 to 149 (TAQARGSGTR…GRSEGGSWRN (70 aa)). Gly residues-rich tracts occupy residues 87–101 (GTRGGMVGGYGSGGY), 110–123 (YNRGGGGGYGGGYG), and 131–143 (YGDGGYGGQGRSE).

Belongs to the GR-RBP family.

Functionally, possibly has a role in RNA transcription or processing during stress. In Arabidopsis thaliana (Mouse-ear cress), this protein is Probable glycine-rich RNA-binding protein 1 (RBG1).